The sequence spans 368 residues: Quinolinate synthase (368 aa).

2 residues coordinate iminosuccinate: His46 and Ser63. Position 110 (Cys110) interacts with [4Fe-4S] cluster. Iminosuccinate is bound by residues 141 to 143 (YVN) and Ser162. Cys230 is a [4Fe-4S] cluster binding site. Iminosuccinate-binding positions include 256-258 (HPE) and Thr273. Cys320 is a binding site for [4Fe-4S] cluster.

The protein belongs to the quinolinate synthase family. Type 3 subfamily. Requires [4Fe-4S] cluster as cofactor.

The protein localises to the cytoplasm. It carries out the reaction iminosuccinate + dihydroxyacetone phosphate = quinolinate + phosphate + 2 H2O + H(+). It participates in cofactor biosynthesis; NAD(+) biosynthesis; quinolinate from iminoaspartate: step 1/1. Catalyzes the condensation of iminoaspartate with dihydroxyacetone phosphate to form quinolinate. In Bacillus cereus (strain G9842), this protein is Quinolinate synthase.